A 622-amino-acid chain; its full sequence is Low affinity potassium transport system protein Kup (622 aa).

12 helical membrane-spanning segments follow: residues 9–29 (LPAI…TSPL), 49–69 (VFGF…IKYL), 103–123 (VIMG…TPAI), 137–157 (PQLD…LFMI), 165–185 (VGKL…GLGL), 213–233 (VSFI…VLYA), 247–267 (WFTV…ALLL), 276–296 (PFFL…AALA), 337–357 (IYIP…IVSF), 363–383 (LAAA…ILST), 396–416 (FVAL…TANL), and 419–439 (LLSG…VMTT).

Belongs to the HAK/KUP transporter (TC 2.A.72) family.

It is found in the cell inner membrane. It catalyses the reaction K(+)(in) + H(+)(in) = K(+)(out) + H(+)(out). Responsible for the low-affinity transport of potassium into the cell. Likely operates as a K(+):H(+) symporter. The protein is Low affinity potassium transport system protein Kup of Shigella flexneri.